Reading from the N-terminus, the 88-residue chain is Small ribosomal subunit protein bS16c (88 aa).

It belongs to the bacterial ribosomal protein bS16 family.

The protein resides in the plastid. It is found in the chloroplast. The protein is Small ribosomal subunit protein bS16c of Lactuca sativa (Garden lettuce).